A 201-amino-acid polypeptide reads, in one-letter code: MSKPVEFEMLVDALKSLPGVGTKNANKWAFFLLQQDQKYIDDLIKRIKEAKTNILKCKYCANFTNKDECDICLNEYRDFTKLMIVTTNEDLERIESANIYNGLYHITNGEISLRKNVVIEHTNIKTIKERVLNGSFKEIIIATSYTHDGEVTADYIIRMLEDIKDLQIYRIGFGIPLNSSIDYADDETLKQSLINKRKIRN.

Residues 57–72 (CKYCANFTNKDECDIC) form a C4-type zinc finger. The Toprim domain occupies 80 to 176 (TKLMIVTTNE…QIYRIGFGIP (97 aa)).

The protein belongs to the RecR family.

Its function is as follows. May play a role in DNA repair. It seems to be involved in an RecBC-independent recombinational process of DNA repair. It may act with RecF and RecO. This is Recombination protein RecR from Ureaplasma parvum serovar 3 (strain ATCC 27815 / 27 / NCTC 11736).